A 261-amino-acid chain; its full sequence is tRNA U34 carboxymethyltransferase (261 aa).

Residues lysine 25, tryptophan 39, lysine 44, glycine 63, 114-115, tyrosine 135, and arginine 250 contribute to the carboxy-S-adenosyl-L-methionine site; that span reads VE.

It belongs to the class I-like SAM-binding methyltransferase superfamily. CmoB family. Homotetramer.

It carries out the reaction carboxy-S-adenosyl-L-methionine + 5-hydroxyuridine(34) in tRNA = 5-carboxymethoxyuridine(34) in tRNA + S-adenosyl-L-homocysteine + H(+). Its function is as follows. Catalyzes carboxymethyl transfer from carboxy-S-adenosyl-L-methionine (Cx-SAM) to 5-hydroxyuridine (ho5U) to form 5-carboxymethoxyuridine (cmo5U) at position 34 in tRNAs. The chain is tRNA U34 carboxymethyltransferase from Helicobacter pylori (strain HPAG1).